The chain runs to 674 residues: Forkhead box protein P1 (674 aa).

Residues 1–19 (MMQESGTETKSNGSAIQNG) show a composition bias toward polar residues. The interval 1 to 44 (MMQESGTETKSNGSAIQNGSSGGNHLLECGSLREGRSNGETPAV) is disordered. Ser-82 carries the post-translational modification Phosphoserine. Over residues 269-281 (MNPHASTNGQLSV) the composition is skewed to polar residues. Residues 269–296 (MNPHASTNGQLSVHTPKRESLSHEEHPH) form a disordered region. The span at 284–296 (PKRESLSHEEHPH) shows a compositional bias: basic and acidic residues. Lys-285 participates in a covalent cross-link: Glycyl lysine isopeptide (Lys-Gly) (interchain with G-Cter in SUMO2). The segment at 304 to 329 (GVCKWPGCEAVCEDFQSFLKHLNSEH) adopts a C2H2-type zinc-finger fold. The leucine-zipper stretch occupies residues 346-367 (VQQLELQLAKDKERLQAMMTHL). Glycyl lysine isopeptide (Lys-Gly) (interchain with G-Cter in SUMO2) cross-links involve residues Lys-370 and Lys-375. Residues 380–384 (PLNLV) are CTBP1-binding. Residues 388–401 (TLSKSASEASPQSL) are compositionally biased toward polar residues. Positions 388-427 (TLSKSASEASPQSLPHTPTTPTAPITPATQGPSVITTTSM) are disordered. A compositionally biased stretch (low complexity) spans 402-419 (PHTPTTPTAPITPATQGP). Lys-440 is covalently cross-linked (Glycyl lysine isopeptide (Lys-Gly) (interchain with G-Cter in SUMO2)). The segment at residues 462 to 552 (RPPFTYASLI…PQKISGNPSL (91 aa)) is a DNA-binding region (fork-head). A disordered region spans residues 608-674 (EHTNSNESDS…EDEPVNEDME (67 aa)). Positions 609–620 (HTNSNESDSSPG) are enriched in polar residues. Phosphothreonine is present on Thr-650. Ser-655 is subject to Phosphoserine. Residues 664–674 (YEDEPVNEDME) show a composition bias toward acidic residues.

In terms of assembly, forms homodimers and heterodimers with FOXP2 and FOXP4. Dimerization is required for DNA-binding. Self-associates. Interacts with CTBP1. Interacts with NCOR2 and AR. Interacts with FOXP2. Interacts with TBR1. Interacts with AURKA; this interaction facilitates the phosphorylation of FOXP1, which suppresses the expression of FBXL7. Interacts with ZMYM2.

It is found in the nucleus. Functionally, transcriptional repressor. Can act with CTBP1 to synergistically repress transcription but CTPBP1 is not essential. Plays an important role in the specification and differentiation of lung epithelium. Acts cooperatively with FOXP4 to regulate lung secretory epithelial cell fate and regeneration by restricting the goblet cell lineage program; the function may involve regulation of AGR2. Essential transcriptional regulator of B-cell development. Involved in regulation of cardiac muscle cell proliferation. Involved in the columnar organization of spinal motor neurons. Promotes the formation of the lateral motor neuron column (LMC) and the preganglionic motor column (PGC) and is required for respective appropriate motor axon projections. The segment-appropriate generation of spinal cord motor columns requires cooperation with other Hox proteins. Can regulate PITX3 promoter activity; may promote midbrain identity in embryonic stem cell-derived dopamine neurons by regulating PITX3. Negatively regulates the differentiation of T follicular helper cells T(FH)s. Involved in maintenance of hair follicle stem cell quiescence; the function probably involves regulation of FGF18. Represses transcription of various pro-apoptotic genes and cooperates with NF-kappa B-signaling in promoting B-cell expansion by inhibition of caspase-dependent apoptosis. Binds to CSF1R promoter elements and is involved in regulation of monocyte differentiation and macrophage functions; repression of CSF1R in monocytes seems to involve NCOR2 as corepressor. Involved in endothelial cell proliferation, tube formation and migration indicative for a role in angiogenesis; the role in neovascularization seems to implicate suppression of SEMA5B. Can negatively regulate androgen receptor signaling. Acts as a transcriptional activator of the FBXL7 promoter; this activity is regulated by AURKA. The chain is Forkhead box protein P1 (FOXP1) from Bos taurus (Bovine).